The following is a 685-amino-acid chain: tRNA-dihydrouridine(47) synthase [NAD(P)(+)]-like (685 aa).

Low complexity predominate over residues 1–12 (MAATAAAAAAAP). 3 disordered regions span residues 1–91 (MAAT…SSSH), 209–234 (AAND…PLCN), and 257–314 (LIDN…SCRT). The span at 13-29 (PADPPDSSPAASSPPRP) shows a compositional bias: pro residues. The C3H1-type zinc-finger motif lies at 87–118 (KSSSHLCIEVGKSGNVSSCKYGDSCRFSHDID). Composition is skewed to basic and acidic residues over residues 209–221 (AAND…HDNL) and 273–284 (SKVESDEIDKHG). Residues 287-314 (TLNTNTESEDPNLSNGLEPSNNSSSCRT) show a composition bias toward polar residues. FMN-binding positions include 338–340 (PLT) and Gln392. Cys423 (proton donor) is an active-site residue. FMN-binding positions include Lys462, His492, 525-527 (NGD), and 550-551 (AR).

Belongs to the Dus family. Dus3 subfamily. Requires FMN as cofactor.

It catalyses the reaction 5,6-dihydrouridine(47) in tRNA + NAD(+) = uridine(47) in tRNA + NADH + H(+). The enzyme catalyses 5,6-dihydrouridine(47) in tRNA + NADP(+) = uridine(47) in tRNA + NADPH + H(+). It carries out the reaction a 5,6-dihydrouridine in mRNA + NAD(+) = a uridine in mRNA + NADH + H(+). The catalysed reaction is a 5,6-dihydrouridine in mRNA + NADP(+) = a uridine in mRNA + NADPH + H(+). Catalyzes the synthesis of dihydrouridine, a modified base found in the D-loop of most tRNAs. Specifically modifies U47 in cytoplasmic tRNAs. Catalyzes the synthesis of dihydrouridine in some mRNAs, thereby affecting their translation. The sequence is that of tRNA-dihydrouridine(47) synthase [NAD(P)(+)]-like from Oryza sativa subsp. japonica (Rice).